We begin with the raw amino-acid sequence, 198 residues long: MQIEISANSRKLHGTGANRRLRSQGRLPGVIYGGNGDAQSIELDHKDLYYKLKMEAFHASILSISIDGKKEQVLLRDVQMHPFKQQVLHIDFQRVRQDQKIHVKVPLHFINADIAPGVKLSGGMISHVATEIEISCLPKDLPEFITVDLSGMTAGSTLHLSDLILSENVEIPALLKGDNLPVATLIAKRGEAGESSEE.

The protein belongs to the bacterial ribosomal protein bL25 family. CTC subfamily. Part of the 50S ribosomal subunit; part of the 5S rRNA/L5/L18/L25 subcomplex. Contacts the 5S rRNA. Binds to the 5S rRNA independently of L5 and L18.

This is one of the proteins that binds to the 5S RNA in the ribosome where it forms part of the central protuberance. This chain is Large ribosomal subunit protein bL25, found in Nitrosomonas europaea (strain ATCC 19718 / CIP 103999 / KCTC 2705 / NBRC 14298).